The following is a 386-amino-acid chain: Chorismate synthase (386 aa).

2 residues coordinate NADP(+): Arg45 and Arg51. FMN contacts are provided by residues 131–133 (RTS), 251–252 (QG), Ser294, 309–313 (KPIPS), and Arg335.

Belongs to the chorismate synthase family. Homotetramer. The cofactor is FMNH2.

The catalysed reaction is 5-O-(1-carboxyvinyl)-3-phosphoshikimate = chorismate + phosphate. Its pathway is metabolic intermediate biosynthesis; chorismate biosynthesis; chorismate from D-erythrose 4-phosphate and phosphoenolpyruvate: step 7/7. In terms of biological role, catalyzes the anti-1,4-elimination of the C-3 phosphate and the C-6 proR hydrogen from 5-enolpyruvylshikimate-3-phosphate (EPSP) to yield chorismate, which is the branch point compound that serves as the starting substrate for the three terminal pathways of aromatic amino acid biosynthesis. This reaction introduces a second double bond into the aromatic ring system. The polypeptide is Chorismate synthase (Clostridium tetani (strain Massachusetts / E88)).